A 509-amino-acid chain; its full sequence is Maturase K (509 aa).

It belongs to the intron maturase 2 family. MatK subfamily.

Its subcellular location is the plastid. It is found in the chloroplast. Functionally, usually encoded in the trnK tRNA gene intron. Probably assists in splicing its own and other chloroplast group II introns. This is Maturase K from Trifolium semipilosum (Kenya clover).